Here is a 265-residue protein sequence, read N- to C-terminus: Urease accessory protein UreH (265 aa).

Belongs to the UreD family. In terms of assembly, ureH, UreF and UreG form a complex that acts as a GTP-hydrolysis-dependent molecular chaperone, activating the urease apoprotein by helping to assemble the nickel containing metallocenter of UreC. The UreE protein probably delivers the nickel.

Its subcellular location is the cytoplasm. Its function is as follows. Required for maturation of urease via the functional incorporation of the urease nickel metallocenter. This is Urease accessory protein UreH from Helicobacter pylori (strain P12).